The primary structure comprises 508 residues: Anaerobic nitric oxide reductase transcription regulator NorR (508 aa).

Aspartate 56 is subject to 4-aspartylphosphate. Residues 186–415 enclose the Sigma-54 factor interaction domain; it reads MIGQSPAMAR…LEHAIHRAAV (230 aa). ATP contacts are provided by residues 214–221 and 277–286; these read GETGVGKE and ADQGTLFLDE. Residues 483 to 502 constitute a DNA-binding region (H-T-H motif); the sequence is WAATARALELDSGNLHRLAK.

The protein operates within nitrogen metabolism; nitric oxide reduction. In terms of biological role, required for the expression of anaerobic nitric oxide (NO) reductase, acts as a transcriptional activator for at least the norVW operon. Activation also requires sigma-54. This Aeromonas hydrophila subsp. hydrophila (strain ATCC 7966 / DSM 30187 / BCRC 13018 / CCUG 14551 / JCM 1027 / KCTC 2358 / NCIMB 9240 / NCTC 8049) protein is Anaerobic nitric oxide reductase transcription regulator NorR.